The primary structure comprises 293 residues: Elongation factor Ts (293 aa).

Residues 80–83 (TDFV) are involved in Mg(2+) ion dislocation from EF-Tu.

The protein belongs to the EF-Ts family.

The protein localises to the cytoplasm. Its function is as follows. Associates with the EF-Tu.GDP complex and induces the exchange of GDP to GTP. It remains bound to the aminoacyl-tRNA.EF-Tu.GTP complex up to the GTP hydrolysis stage on the ribosome. The polypeptide is Elongation factor Ts (Paraburkholderia phytofirmans (strain DSM 17436 / LMG 22146 / PsJN) (Burkholderia phytofirmans)).